Here is a 171-residue protein sequence, read N- to C-terminus: Plastocyanin minor isoform, chloroplastic (171 aa).

The Plastocyanin-like domain maps to 73-171; it reads MEVLLGSDDG…AGMVGKLTVK (99 aa). Cu cation-binding residues include histidine 109, cysteine 156, histidine 159, and methionine 164.

This sequence belongs to the plastocyanin family. It depends on Cu(2+) as a cofactor.

The protein localises to the plastid. It is found in the chloroplast thylakoid membrane. Functionally, participates in electron transfer between P700 and the cytochrome b6-f complex in photosystem I. Seems to be a minor plastocyanin in Arabidopsis. The sequence is that of Plastocyanin minor isoform, chloroplastic (PETE) from Arabidopsis thaliana (Mouse-ear cress).